Consider the following 294-residue polypeptide: Transcription factor nsy-7 (294 aa).

Disordered regions lie at residues 43–119 (CNLR…TPDL) and 167–191 (LRLP…DSPL). Polar residues-rich tracts occupy residues 52–63 (DQPTTSSNSVKE) and 81–115 (RRQS…SNDP). The segment at residues 192-232 (QTRMKGWQREYIKEVIKDSHYPTEEELRDIEQKCDLSRKQI) is a DNA-binding region (homeobox; atypical). A disordered region spans residues 238 to 274 (KRLTNPNRKPRVNHHDEKRKEQEERDSLADPDDDMIN). Positions 250-265 (NHHDEKRKEQEERDSL) are enriched in basic and acidic residues.

As to expression, expressed widely, including gut, the amphid sheath glial cells, and head and tail neurons including AWC, ASE, and ASH. Expressed in AWC (ON) olfactory neuron but not AWC (OFF).

The protein localises to the nucleus. Transcriptional regulator which binds DNA consensus sequence 5'-CCTTAAC-3'. Plays a role in establishing and maintaining asymmetric cell fates in chemosensory AWC neurons during larval neuronal development. This is achieved by repressing the expression of multiple AWC (OFF) genes, including srsx-3 and hlh-11 in the AWC (ON) neuron. Activates expression of sox-2 in the AWC (ON) neuron. This is Transcription factor nsy-7 from Caenorhabditis elegans.